The sequence spans 301 residues: Small ribosomal subunit protein uS2 (301 aa).

A disordered region spans residues P237–W301. Over residues P264–A278 the composition is skewed to low complexity.

It belongs to the universal ribosomal protein uS2 family. As to quaternary structure, component of the small ribosomal subunit. Mature ribosomes consist of a small (40S) and a large (60S) subunit. The 40S subunit contains about 33 different proteins and 1 molecule of RNA (18S). The 60S subunit contains about 49 different proteins and 3 molecules of RNA (28S, 5.8S and 5S). Interacts with ribosomal protein S21.

It is found in the cytoplasm. Its function is as follows. Required for the assembly and/or stability of the 40S ribosomal subunit. Required for the processing of the 20S rRNA-precursor to mature 18S rRNA in a late step of the maturation of 40S ribosomal subunits. The sequence is that of Small ribosomal subunit protein uS2 from Diaphorina citri (Asian citrus psyllid).